A 377-amino-acid chain; its full sequence is Glycine oxidase (377 aa).

FAD is bound by residues 14-15, 34-35, 42-43, 47-49, and V180; these read VI, EK, AS, and AGM. Substrate-binding residues include R309 and R336. Position 334 to 340 (334 to 340) interacts with FAD; that stretch reads HYRNGIL.

This sequence belongs to the DAO family. ThiO subfamily. Homotetramer. FAD serves as cofactor.

It carries out the reaction glycine + O2 + H2O = glyoxylate + H2O2 + NH4(+). The catalysed reaction is N-ethylglycine + O2 + H2O = ethylamine + glyoxylate + H2O2. The enzyme catalyses sarcosine + O2 + H2O = methylamine + glyoxylate + H2O2. It catalyses the reaction D-alanine + O2 + H2O = pyruvate + H2O2 + NH4(+). It participates in cofactor biosynthesis; thiamine diphosphate biosynthesis. With respect to regulation, is inhibited at high substrate concentration. Its function is as follows. Catalyzes the FAD-dependent oxidative deamination of various amines and D-amino acids to yield the corresponding alpha-keto acids, ammonia/amine, and hydrogen peroxide. Oxidizes glycine, sarcosine (N-methylglycine), N-ethylglycine, D-proline, D-alanine, glycine-ethyl ester, and some other D-amino acids. Does not act on L-proline. Is essential for thiamine biosynthesis since the oxidation of glycine catalyzed by ThiO generates the glycine imine intermediate (dehydroglycine) required for the biosynthesis of the thiazole ring of thiamine pyrophosphate. This is Glycine oxidase from Geobacillus kaustophilus (strain HTA426).